The chain runs to 88 residues: Small ribosomal subunit protein bS20 (88 aa).

This sequence belongs to the bacterial ribosomal protein bS20 family.

Binds directly to 16S ribosomal RNA. The sequence is that of Small ribosomal subunit protein bS20 from Coprothermobacter proteolyticus (strain ATCC 35245 / DSM 5265 / OCM 4 / BT).